Consider the following 828-residue polypeptide: E3 ubiquitin-protein ligase bre-1 (828 aa).

Residues 1 to 25 (MMKRNNEGIGGEGVANSPPDDTQQK) are disordered. Residues 1–309 (MMKRNNEGIG…SREIEALRAD (309 aa)) form an interaction with ubc-1 region. Coiled-coil stretches lie at residues 53-92 (QAAK…FLKV) and 185-251 (HKEL…TEKQ). The segment covering 269 to 298 (ASGNATASSSATLNQSEKKMGSPGSPPSES) has biased composition (low complexity). Residues 269 to 304 (ASGNATASSSATLNQSEKKMGSPGSPPSESTSREIE) form a disordered region. Coiled coils occupy residues 311-345 (DEQA…KMET), 460-616 (VNTL…RNLK), and 660-756 (DEVL…NDSA). The RING-type zinc-finger motif lies at 776–815 (CPSCKTRPKDCIMLKCYHLFCETCIKTMYDTRQRKCPKCN).

Belongs to the BRE1 family. In terms of assembly, interacts with ubc-1. Interacts with mrg-1.

The protein resides in the nucleus. The catalysed reaction is S-ubiquitinyl-[E2 ubiquitin-conjugating enzyme]-L-cysteine + [acceptor protein]-L-lysine = [E2 ubiquitin-conjugating enzyme]-L-cysteine + N(6)-ubiquitinyl-[acceptor protein]-L-lysine.. Its pathway is protein modification; protein ubiquitination. Its function is as follows. E3 ubiquitin-protein ligase that mediates monoubiquitination of 'Lys-117' of histone H2B. H2B 'Lys-117' ubiquitination gives a specific tag for epigenetic transcriptional activation and is also prerequisite for histone H3 'Lys-4' and 'Lys-79' methylation. Involved in regulating stem cell proliferative fate. The sequence is that of E3 ubiquitin-protein ligase bre-1 from Caenorhabditis briggsae.